The chain runs to 1019 residues: Outer capsid protein P3 (1019 aa).

The protein belongs to the phytoreovirus inner capsid protein P3 family. As to quaternary structure, homodimer. Homomultimer.

The protein resides in the virion. It localises to the host cytoplasm. Functionally, capsid protein which self-assembles to form the inner icosahedral capsid with a T=2 symmetry, and consisting of 60 P3 dimers. The protein is Outer capsid protein P3 of Rice dwarf virus (isolate Fujian) (RDV).